The primary structure comprises 308 residues: Putative ankyrin repeat protein R835 (308 aa).

ANK repeat units follow at residues 100 to 129, 152 to 181, 190 to 217, 218 to 247, 249 to 277, and 279 to 305; these read DINE…NIDL, PMNK…YVDF, SEYT…GANY, KSSY…DLEK, GLRS…EIDY, and YYIY…SKQI.

In Acanthamoeba polyphaga (Amoeba), this protein is Putative ankyrin repeat protein R835.